The following is a 95-amino-acid chain: Beta-defensin 132 (95 aa).

The first 22 residues, 1–22 (MKFLLLVLAALGFLTQVIPASG), serve as a signal peptide directing secretion. 3 disulfides stabilise this stretch: cysteine 27-cysteine 55, cysteine 35-cysteine 49, and cysteine 39-cysteine 56. Positions 72–95 (GNHWPSRSRNTQRKNKKQQTTVTP) are disordered.

This sequence belongs to the beta-defensin family.

The protein resides in the secreted. In terms of biological role, has antibacterial activity. This is Beta-defensin 132 (DEFB132) from Macaca fascicularis (Crab-eating macaque).